Reading from the N-terminus, the 189-residue chain is Interferon alpha-G (189 aa).

The first 23 residues, 1–23 (MAPAWSLLLALLLLSCNAICSLG), serve as a signal peptide directing secretion. Intrachain disulfides connect Cys-24–Cys-122 and Cys-52–Cys-162.

Belongs to the alpha/beta interferon family.

It localises to the secreted. In terms of biological role, produced by macrophages, IFN-alpha have antiviral activities. Interferon stimulates the production of two enzymes: a protein kinase and an oligoadenylate synthetase. The protein is Interferon alpha-G (IFNAG) of Bos taurus (Bovine).